Consider the following 195-residue polypeptide: Interferon omega-1 (195 aa).

Residues M1–S23 form the signal peptide. 2 disulfide bridges follow: C24-C122 and C52-C162. N101 carries an N-linked (GlcNAc...) asparagine glycan.

Belongs to the alpha/beta interferon family.

The protein localises to the secreted. The sequence is that of Interferon omega-1 from Equus caballus (Horse).